The primary structure comprises 230 residues: GTP cyclohydrolase III (230 aa).

The protein belongs to the archaeal-type GTP cyclohydrolase family.

The catalysed reaction is GTP + 3 H2O = 2-amino-5-formylamino-6-(5-phospho-D-ribosylamino)pyrimidin-4(3H)-one + 2 phosphate + 2 H(+). Its function is as follows. Catalyzes the formation of 2-amino-5-formylamino-6-ribofuranosylamino-4(3H)-pyrimidinone ribonucleotide monophosphate and inorganic phosphate from GTP. Also has an independent pyrophosphate phosphohydrolase activity. This is GTP cyclohydrolase III from Saccharolobus islandicus (strain M.14.25 / Kamchatka #1) (Sulfolobus islandicus).